The primary structure comprises 917 residues: Isoleucine--tRNA ligase (917 aa).

The short motif at 59–69 is the 'HIGH' region element; sequence PYANGHIHIGH. Glu-569 provides a ligand contact to L-isoleucyl-5'-AMP. The 'KMSKS' region signature appears at 610-614; sequence KMSKS. Lys-613 is an ATP binding site. Residues Cys-890, Cys-893, Cys-905, and Cys-908 each coordinate Zn(2+).

The protein belongs to the class-I aminoacyl-tRNA synthetase family. IleS type 1 subfamily. Monomer. The cofactor is Zn(2+).

Its subcellular location is the cytoplasm. It carries out the reaction tRNA(Ile) + L-isoleucine + ATP = L-isoleucyl-tRNA(Ile) + AMP + diphosphate. In terms of biological role, catalyzes the attachment of isoleucine to tRNA(Ile). As IleRS can inadvertently accommodate and process structurally similar amino acids such as valine, to avoid such errors it has two additional distinct tRNA(Ile)-dependent editing activities. One activity is designated as 'pretransfer' editing and involves the hydrolysis of activated Val-AMP. The other activity is designated 'posttransfer' editing and involves deacylation of mischarged Val-tRNA(Ile). In Campylobacter jejuni subsp. jejuni serotype O:2 (strain ATCC 700819 / NCTC 11168), this protein is Isoleucine--tRNA ligase.